A 574-amino-acid chain; its full sequence is uncharacterized protein (574 aa).

The tract at residues 297-327 is disordered; the sequence is STASKSKKRRKDEVSGAQRNSSPLPQDAVSS. The span at 313 to 327 shows a compositional bias: polar residues; sequence AQRNSSPLPQDAVSS.

This is an uncharacterized protein from Macaca fascicularis (Crab-eating macaque).